The sequence spans 160 residues: Nucleotide-binding protein Patl_4311 (160 aa).

It belongs to the YajQ family.

Functionally, nucleotide-binding protein. The sequence is that of Nucleotide-binding protein Patl_4311 from Pseudoalteromonas atlantica (strain T6c / ATCC BAA-1087).